Here is a 480-residue protein sequence, read N- to C-terminus: Glutarate-semialdehyde dehydrogenase (480 aa).

Residues 156-157 (WN), 180-183 (KPAS), and 233-234 (GS) each bind NADP(+). The Proton acceptor role is filled by E255. NADP(+) is bound at residue L256. Catalysis depends on C289, which acts as the Nucleophile. E384 provides a ligand contact to NADP(+).

This sequence belongs to the aldehyde dehydrogenase family.

It carries out the reaction 5-oxopentanoate + NADP(+) + H2O = glutarate + NADPH + 2 H(+). It participates in amino-acid degradation. Its function is as follows. Catalyzes the conversion of 5-oxopentanoate (glutarate semialdehyde) to glutarate. Involved in L-lysine degradation. The polypeptide is Glutarate-semialdehyde dehydrogenase (Pseudomonas putida (strain ATCC 47054 / DSM 6125 / CFBP 8728 / NCIMB 11950 / KT2440)).